The primary structure comprises 198 residues: RNA pyrophosphohydrolase (198 aa).

The region spanning 6–149 (GYRPNVGIVI…KKEVYRKAMK (144 aa)) is the Nudix hydrolase domain. The Nudix box motif lies at 38–59 (GGINDNESAEQAMYRELFEEVG).

This sequence belongs to the Nudix hydrolase family. RppH subfamily. A divalent metal cation serves as cofactor.

In terms of biological role, accelerates the degradation of transcripts by removing pyrophosphate from the 5'-end of triphosphorylated RNA, leading to a more labile monophosphorylated state that can stimulate subsequent ribonuclease cleavage. In Pasteurella multocida (strain Pm70), this protein is RNA pyrophosphohydrolase.